The sequence spans 63 residues: Anionic peptide NDBP7 (63 aa).

An N-terminal signal peptide occupies residues 1–20 (MISRFCLLFLLVFVVSKIQA).

This sequence belongs to the non-disulfide-bridged peptide (NDBP) superfamily. Long chain multifunctional peptide (group 2) family. In terms of tissue distribution, expressed by the venom gland.

The protein resides in the secreted. The sequence is that of Anionic peptide NDBP7 from Lychas mucronatus (Chinese swimming scorpion).